We begin with the raw amino-acid sequence, 295 residues long: Protease HtpX (295 aa).

Transmembrane regions (helical) follow at residues 4-24 (ILLF…TLSL) and 41-61 (SSLL…SLFI). Residue His147 participates in Zn(2+) binding. Glu148 is an active-site residue. His151 contacts Zn(2+). A run of 2 helical transmembrane segments spans residues 158-178 (VTLA…ARII) and 199-219 (VATI…VMWF). Glu224 contributes to the Zn(2+) binding site.

It belongs to the peptidase M48B family. It depends on Zn(2+) as a cofactor.

The protein localises to the cell inner membrane. The chain is Protease HtpX from Pseudomonas putida (strain GB-1).